Here is a 412-residue protein sequence, read N- to C-terminus: Peptidase T (412 aa).

Residue histidine 84 coordinates Zn(2+). Aspartate 86 is a catalytic residue. Residue aspartate 146 participates in Zn(2+) binding. Residue glutamate 179 is the Proton acceptor of the active site. Residues glutamate 180, aspartate 202, and histidine 385 each coordinate Zn(2+).

It belongs to the peptidase M20B family. The cofactor is Zn(2+).

The protein resides in the cytoplasm. It carries out the reaction Release of the N-terminal residue from a tripeptide.. In terms of biological role, cleaves the N-terminal amino acid of tripeptides. This is Peptidase T from Pasteurella multocida (strain Pm70).